The following is a 268-amino-acid chain: Protein MGF 300-1L (268 aa).

Over 1-175 (MVSLTTYCLK…QTFKTFYAKN (175 aa)) the chain is Cytoplasmic. A helical transmembrane segment spans residues 176 to 193 (YSLSTLYCIFLAIYYKLY). The Extracellular portion of the chain corresponds to 194–268 (MALRKMVKIY…MYAFSQNNFW (75 aa)).

The protein belongs to the asfivirus MGF 300 family.

It localises to the host membrane. Functionally, plays a role in virus cell tropism, and may be required for efficient virus replication in macrophages. This African swine fever virus (isolate Tick/Malawi/Lil 20-1/1983) (ASFV) protein is Protein MGF 300-1L.